The following is a 420-amino-acid chain: Probable protein phosphatase 2C 76 (420 aa).

In terms of domain architecture, PPM-type phosphatase spans 101–347; sequence SCGYCSFRGK…DNITCIVVKF (247 aa). Mn(2+) is bound by residues D137, G138, D299, and D338. The segment at 353–420 is disordered; sequence ESPKIETNAM…PETKGEKAGE (68 aa). Positions 403 to 420 are enriched in basic and acidic residues; sequence PDPKPETEPETKGEKAGE.

It belongs to the PP2C family. Mg(2+) serves as cofactor. The cofactor is Mn(2+).

It catalyses the reaction O-phospho-L-seryl-[protein] + H2O = L-seryl-[protein] + phosphate. The catalysed reaction is O-phospho-L-threonyl-[protein] + H2O = L-threonyl-[protein] + phosphate. This chain is Probable protein phosphatase 2C 76, found in Arabidopsis thaliana (Mouse-ear cress).